Here is a 206-residue protein sequence, read N- to C-terminus: Small ribosomal subunit protein uS7 (206 aa).

The segment covering 1 to 19 has biased composition (acidic residues); it reads MSAEDTPEADADAAEESEP. A disordered region spans residues 1–25; that stretch reads MSAEDTPEADADAAEESEPETARAK. Serine 2 is modified (N-acetylserine).

The protein belongs to the universal ribosomal protein uS7 family. Part of the 30S ribosomal subunit.

Its function is as follows. One of the primary rRNA binding proteins, it binds directly to 16S rRNA where it nucleates assembly of the head domain of the 30S subunit. Is located at the subunit interface close to the decoding center. This Haloarcula marismortui (strain ATCC 43049 / DSM 3752 / JCM 8966 / VKM B-1809) (Halobacterium marismortui) protein is Small ribosomal subunit protein uS7.